We begin with the raw amino-acid sequence, 67 residues long: Ayadualin (67 aa).

The N-terminal stretch at Met1–Ala20 is a signal peptide. A compositionally biased stretch (acidic residues) spans Pro35–Glu54. Positions Pro35–Cys67 are disordered. The Integrin-binding motif signature appears at Arg64 to Asp66.

As to expression, salivary gland.

Its subcellular location is the secreted. Inhibits collagen- and ADP-induced host platelet aggregation by blocking the binding of host integrin alpha-IIb/beta-3 (ITGA2B/ITGB3) to fibrinogen. Inhibits the intrinsic blood coagulation pathway in the host by blocking the activity of host coagulation factor XIIa (F12). The sequence is that of Ayadualin from Lutzomyia ayacuchensis (Sand fly).